Here is a 319-residue protein sequence, read N- to C-terminus: Acetyl-coenzyme A carboxylase carboxyl transferase subunit alpha (319 aa).

The CoA carboxyltransferase C-terminal domain maps to 35–296 (NLDEEVQRLR…KAQLLADLAD (262 aa)).

Belongs to the AccA family. In terms of assembly, acetyl-CoA carboxylase is a heterohexamer composed of biotin carboxyl carrier protein (AccB), biotin carboxylase (AccC) and two subunits each of ACCase subunit alpha (AccA) and ACCase subunit beta (AccD).

Its subcellular location is the cytoplasm. The catalysed reaction is N(6)-carboxybiotinyl-L-lysyl-[protein] + acetyl-CoA = N(6)-biotinyl-L-lysyl-[protein] + malonyl-CoA. It participates in lipid metabolism; malonyl-CoA biosynthesis; malonyl-CoA from acetyl-CoA: step 1/1. Component of the acetyl coenzyme A carboxylase (ACC) complex. First, biotin carboxylase catalyzes the carboxylation of biotin on its carrier protein (BCCP) and then the CO(2) group is transferred by the carboxyltransferase to acetyl-CoA to form malonyl-CoA. The sequence is that of Acetyl-coenzyme A carboxylase carboxyl transferase subunit alpha from Erwinia tasmaniensis (strain DSM 17950 / CFBP 7177 / CIP 109463 / NCPPB 4357 / Et1/99).